The sequence spans 770 residues: Multifunctional tryptophan biosynthesis protein (770 aa).

Residues 25 to 225 enclose the Glutamine amidotransferase type-1 domain; the sequence is NVILIDNYDS…LKLTAGTWEG (201 aa). Residue 76–78 coordinates L-glutamine; it reads GPG. Cysteine 104 acts as the Nucleophile; for GATase activity in catalysis. Residues glutamine 108 and 154–155 each bind L-glutamine; that span reads SL. Residues histidine 199 and glutamate 201 each act as for GATase activity in the active site. The tract at residues 228-251 is disordered; sequence KHFGEQSSTTKATVPSNPPPKTDK. Polar residues predominate over residues 232 to 242; it reads EQSSTTKATVP. The tract at residues 255 to 519 is indole-3-glycerol phosphate synthase; the sequence is ILERIYDHRR…DTATFIAELL (265 aa). The segment at 535 to 770 is N-(5'-phosphoribosyl)anthranilate isomerase; it reads LVKICGTRSE…RAFVQAVRGL (236 aa).

It carries out the reaction N-(5-phospho-beta-D-ribosyl)anthranilate = 1-(2-carboxyphenylamino)-1-deoxy-D-ribulose 5-phosphate. It catalyses the reaction 1-(2-carboxyphenylamino)-1-deoxy-D-ribulose 5-phosphate + H(+) = (1S,2R)-1-C-(indol-3-yl)glycerol 3-phosphate + CO2 + H2O. The enzyme catalyses chorismate + L-glutamine = anthranilate + pyruvate + L-glutamate + H(+). It functions in the pathway amino-acid biosynthesis; L-tryptophan biosynthesis; L-tryptophan from chorismate: step 1/5. The protein operates within amino-acid biosynthesis; L-tryptophan biosynthesis; L-tryptophan from chorismate: step 3/5. It participates in amino-acid biosynthesis; L-tryptophan biosynthesis; L-tryptophan from chorismate: step 4/5. Functionally, trifunctional enzyme bearing the Gln amidotransferase (GATase) domain of anthranilate synthase, indole-glycerolphosphate synthase, and phosphoribosylanthranilate isomerase activities. The sequence is that of Multifunctional tryptophan biosynthesis protein (trpC) from Aspergillus niger.